Here is a 251-residue protein sequence, read N- to C-terminus: MELFAVPGLPEIRDGDDLAAMIDERVDLREGDVVVVASTVVSKAEGRTFDLSDFPASERAEAVADRLAEIAGEEKDPRFAQAVIEESTELIMEAPFLLTATRFGHIGVNAGIDQSNVPDGDLLLLPERPSESAARIREGIAADRVVVSDTCGRPFRHGQRGVAIGWAGLPASRDWRGERDRDGREMGVTVQNVIDELASAANLVAGEGDGGTPVVVVRDWEFGDHDGSDNHFREVEGDFVRQALRQWTFDD.

Residues 9-12 (LPEI), 38-39 (ST), and Lys43 each bind GTP. Asp113 lines the a divalent metal cation pocket. Asn116 is a binding site for GTP. Residues Asp149, Thr150, and Glu207 each contribute to the a divalent metal cation site. 205 to 212 (AGEGDGGT) is a binding site for GTP.

Belongs to the CofE family. Homodimer. It depends on Mg(2+) as a cofactor. The cofactor is Mn(2+). Requires K(+) as cofactor.

The enzyme catalyses oxidized coenzyme F420-0 + GTP + L-glutamate = oxidized coenzyme F420-1 + GDP + phosphate + H(+). The catalysed reaction is oxidized coenzyme F420-1 + GTP + L-glutamate = oxidized coenzyme F420-2 + GDP + phosphate + H(+). The protein operates within cofactor biosynthesis; coenzyme F420 biosynthesis. In terms of biological role, catalyzes the GTP-dependent successive addition of two or more gamma-linked L-glutamates to the L-lactyl phosphodiester of 7,8-didemethyl-8-hydroxy-5-deazariboflavin (F420-0) to form coenzyme F420-0-glutamyl-glutamate (F420-2) or polyglutamated F420 derivatives. The polypeptide is Coenzyme F420:L-glutamate ligase (Halorubrum lacusprofundi (strain ATCC 49239 / DSM 5036 / JCM 8891 / ACAM 34)).